The chain runs to 432 residues: Adenylosuccinate synthetase (432 aa).

GTP is bound by residues 12–18 (GDEGKGK) and 40–42 (GHT). Residue Asp13 is the Proton acceptor of the active site. Positions 13 and 40 each coordinate Mg(2+). Residues 13-16 (DEGK), 38-41 (NAGH), Thr132, Arg146, Gln226, Thr241, and Arg305 each bind IMP. His41 acts as the Proton donor in catalysis. Residue 301–307 (VVTGRKR) participates in substrate binding. Residues Arg307, 333–335 (KLD), and 415–417 (STS) contribute to the GTP site.

Belongs to the adenylosuccinate synthetase family. Homodimer. Mg(2+) serves as cofactor.

It is found in the cytoplasm. It carries out the reaction IMP + L-aspartate + GTP = N(6)-(1,2-dicarboxyethyl)-AMP + GDP + phosphate + 2 H(+). It participates in purine metabolism; AMP biosynthesis via de novo pathway; AMP from IMP: step 1/2. Plays an important role in the de novo pathway of purine nucleotide biosynthesis. Catalyzes the first committed step in the biosynthesis of AMP from IMP. The protein is Adenylosuccinate synthetase of Rhizobium johnstonii (strain DSM 114642 / LMG 32736 / 3841) (Rhizobium leguminosarum bv. viciae).